Reading from the N-terminus, the 56-residue chain is Large ribosomal subunit protein bL32 (56 aa).

The tract at residues 1 to 21 is disordered; that stretch reads MAVQKNKPTRSKRGMRRSHDA. The segment covering 7–16 has biased composition (basic residues); the sequence is KPTRSKRGMR.

Belongs to the bacterial ribosomal protein bL32 family.

The sequence is that of Large ribosomal subunit protein bL32 from Hamiltonella defensa subsp. Acyrthosiphon pisum (strain 5AT).